The chain runs to 187 residues: dCTP deaminase (187 aa).

Residues 107–112, 131–133, Gln152, Tyr166, Lys175, and Gln176 contribute to the dCTP site; these read KSTYAR and TLE. Residue Glu133 is the Proton donor/acceptor of the active site.

Belongs to the dCTP deaminase family. As to quaternary structure, homotrimer.

It catalyses the reaction dCTP + H2O + H(+) = dUTP + NH4(+). The protein operates within pyrimidine metabolism; dUMP biosynthesis; dUMP from dCTP (dUTP route): step 1/2. Catalyzes the deamination of dCTP to dUTP. In Ehrlichia canis (strain Jake), this protein is dCTP deaminase.